A 90-amino-acid polypeptide reads, in one-letter code: Small ribosomal subunit protein bS16 (90 aa).

It belongs to the bacterial ribosomal protein bS16 family.

The sequence is that of Small ribosomal subunit protein bS16 from Streptococcus equi subsp. zooepidemicus (strain H70).